A 152-amino-acid chain; its full sequence is Ribosome maturation factor RimP (152 aa).

Belongs to the RimP family.

It localises to the cytoplasm. In terms of biological role, required for maturation of 30S ribosomal subunits. In Francisella tularensis subsp. tularensis (strain FSC 198), this protein is Ribosome maturation factor RimP.